Here is a 112-residue protein sequence, read N- to C-terminus: DNA-binding protein TK1278 (112 aa).

The protein belongs to the PDCD5 family.

This Thermococcus kodakarensis (strain ATCC BAA-918 / JCM 12380 / KOD1) (Pyrococcus kodakaraensis (strain KOD1)) protein is DNA-binding protein TK1278.